Consider the following 471-residue polypeptide: MEVSFSAPPPPDAASAAAAAPSLVPAVSAAAVAATTVSCSPQPPTGSPSADDRILVSVEVLLHATSTARAEDVCAAVERMLEARSLSYVDGPVPIPNDDPFLLANVKRIQICDTDEWTENHKVLLFWQVRPVVHVFQLSEDGPGEEPGEDDTLSSFNEWALPAKEFDGLWESLLYEVGLKQRLLRYAASALLFTEKGVDPCLVSWNRIVLLHGPPGTGKTSLCKALAQKLSIRFKSRYSMCQLIEVNAHSLFSKWFSESGKLVAKLFQKIQEMVEEESNLVFVLIDEVESLAAARQAAISGSEPSDSIRVVNALLTQMDKLKSWPNVIILTTSNITTAIDIAFVDRADIKAYVGPPTLQARYEILRSCLQELLRVGILTHTQGGNSLCLLSYFSLMENQHCPEVADPHGSVHLSGLLHKAAEICEGLSGRTLRKLPFLAHASVANPSCCDASAFLHALIQTAQRELSESRG.

G213–T220 serves as a coordination point for ATP.

It belongs to the AAA ATPase family. PCH2 subfamily.

Functionally, plays a key role in chromosome recombination during meiosis. In Oryza sativa subsp. indica (Rice), this protein is Pachytene checkpoint protein 2 homolog.